The following is a 425-amino-acid chain: Serine--tRNA ligase (425 aa).

229–231 contributes to the L-serine binding site; that stretch reads TAE. Position 260–262 (260–262) interacts with ATP; that stretch reads RSE. L-serine is bound at residue Glu283. Position 347–350 (347–350) interacts with ATP; sequence EISS. Ser384 contributes to the L-serine binding site.

This sequence belongs to the class-II aminoacyl-tRNA synthetase family. Type-1 seryl-tRNA synthetase subfamily. As to quaternary structure, homodimer. The tRNA molecule binds across the dimer.

Its subcellular location is the cytoplasm. It carries out the reaction tRNA(Ser) + L-serine + ATP = L-seryl-tRNA(Ser) + AMP + diphosphate + H(+). It catalyses the reaction tRNA(Sec) + L-serine + ATP = L-seryl-tRNA(Sec) + AMP + diphosphate + H(+). It participates in aminoacyl-tRNA biosynthesis; selenocysteinyl-tRNA(Sec) biosynthesis; L-seryl-tRNA(Sec) from L-serine and tRNA(Sec): step 1/1. Catalyzes the attachment of serine to tRNA(Ser). Is also able to aminoacylate tRNA(Sec) with serine, to form the misacylated tRNA L-seryl-tRNA(Sec), which will be further converted into selenocysteinyl-tRNA(Sec). The sequence is that of Serine--tRNA ligase from Rhizorhabdus wittichii (strain DSM 6014 / CCUG 31198 / JCM 15750 / NBRC 105917 / EY 4224 / RW1) (Sphingomonas wittichii).